The chain runs to 316 residues: Acetyl-coenzyme A carboxylase carboxyl transferase subunit beta (316 aa).

A CoA carboxyltransferase N-terminal domain is found at 29-298 (LWTKCPNCGV…LLSPLNSHHH (270 aa)). Zn(2+) is bound by residues Cys-33, Cys-36, Cys-52, and Cys-55. The segment at 33–55 (CPNCGVLAYTKDLLANQLVCLDC) adopts a C4-type zinc-finger fold.

The protein belongs to the AccD/PCCB family. Acetyl-CoA carboxylase is a heterohexamer composed of biotin carboxyl carrier protein (AccB), biotin carboxylase (AccC) and two subunits each of ACCase subunit alpha (AccA) and ACCase subunit beta (AccD). Zn(2+) serves as cofactor.

The protein resides in the cytoplasm. It catalyses the reaction N(6)-carboxybiotinyl-L-lysyl-[protein] + acetyl-CoA = N(6)-biotinyl-L-lysyl-[protein] + malonyl-CoA. The protein operates within lipid metabolism; malonyl-CoA biosynthesis; malonyl-CoA from acetyl-CoA: step 1/1. Its function is as follows. Component of the acetyl coenzyme A carboxylase (ACC) complex. Biotin carboxylase (BC) catalyzes the carboxylation of biotin on its carrier protein (BCCP) and then the CO(2) group is transferred by the transcarboxylase to acetyl-CoA to form malonyl-CoA. This Microcystis aeruginosa (strain NIES-843 / IAM M-2473) protein is Acetyl-coenzyme A carboxylase carboxyl transferase subunit beta.